We begin with the raw amino-acid sequence, 327 residues long: uncharacterized protein (327 aa).

A helical membrane pass occupies residues 12–32 (LVVVVVAIAIFTLVLLMLWEG). The disordered stretch occupies residues 149 to 170 (AFSAVETSEGSDQESEGADEQG). Over residues 157–167 (EGSDQESEGAD) the composition is skewed to acidic residues. Residues 162-227 (ESEGADEQGK…LDEENREVAE (66 aa)) adopt a coiled-coil conformation.

Its subcellular location is the membrane. This is an uncharacterized protein from Encephalitozoon cuniculi (strain GB-M1) (Microsporidian parasite).